Consider the following 201-residue polypeptide: Pyridoxine/pyridoxamine 5'-phosphate oxidase (201 aa).

Residues 49-54, 64-65, Lys71, and Gln93 each bind FMN; these read RMVLLK and YT. Lys54 is a substrate binding site. Substrate contacts are provided by Tyr111, Arg115, and Ser119. FMN contacts are provided by residues 128–129 and Trp172; that span reads QS. 178–180 contributes to the substrate binding site; the sequence is RLH. Residue Arg182 coordinates FMN.

The protein belongs to the pyridoxamine 5'-phosphate oxidase family. In terms of assembly, homodimer. FMN serves as cofactor.

It carries out the reaction pyridoxamine 5'-phosphate + O2 + H2O = pyridoxal 5'-phosphate + H2O2 + NH4(+). It catalyses the reaction pyridoxine 5'-phosphate + O2 = pyridoxal 5'-phosphate + H2O2. Its pathway is cofactor metabolism; pyridoxal 5'-phosphate salvage; pyridoxal 5'-phosphate from pyridoxamine 5'-phosphate: step 1/1. The protein operates within cofactor metabolism; pyridoxal 5'-phosphate salvage; pyridoxal 5'-phosphate from pyridoxine 5'-phosphate: step 1/1. In terms of biological role, catalyzes the oxidation of either pyridoxine 5'-phosphate (PNP) or pyridoxamine 5'-phosphate (PMP) into pyridoxal 5'-phosphate (PLP). The protein is Pyridoxine/pyridoxamine 5'-phosphate oxidase of Ruegeria sp. (strain TM1040) (Silicibacter sp.).